Here is a 440-residue protein sequence, read N- to C-terminus: Xylose isomerase (440 aa).

Active-site residues include histidine 101 and aspartate 104. The Mg(2+) site is built by glutamate 232, glutamate 268, histidine 271, aspartate 296, aspartate 307, aspartate 309, and aspartate 339.

The protein belongs to the xylose isomerase family. As to quaternary structure, homotetramer. Mg(2+) serves as cofactor.

The protein localises to the cytoplasm. The enzyme catalyses alpha-D-xylose = alpha-D-xylulofuranose. The sequence is that of Xylose isomerase from Escherichia coli O17:K52:H18 (strain UMN026 / ExPEC).